The chain runs to 233 residues: H-2 class II histocompatibility antigen, A-R alpha chain (233 aa).

The segment at 1–88 is alpha-1; it reads EDDIEADHVG…KRSNFTPAAN (88 aa). The Extracellular portion of the chain corresponds to 1–195; it reads EDDIEADHVG…IPAPMSELTE (195 aa). Residues 89-182 form an alpha-2 region; that stretch reads EAPQATVFPK…GLEEPVLKHW (94 aa). An Ig-like C1-type domain is found at 91 to 183; sequence PQATVFPKSP…LEEPVLKHWE (93 aa). A disulfide bridge links Cys-111 with Cys-167. Asn-122 is a glycosylation site (N-linked (GlcNAc...) asparagine). Residues 183-195 form a connecting peptide region; it reads EPEIPAPMSELTE. The helical transmembrane segment at 196 to 221 threads the bilayer; that stretch reads TVVCALGLSVGLVGIVVGTIFIIQGL. Residues 222 to 233 are Cytoplasmic-facing; the sequence is RSGGTSRHPGPL.

It belongs to the MHC class II family.

It is found in the membrane. In Mus musculus (Mouse), this protein is H-2 class II histocompatibility antigen, A-R alpha chain (H2-Aa).